Here is a 295-residue protein sequence, read N- to C-terminus: G1/S-specific cyclin-D1 (295 aa).

Positions 28 to 152 (LRAMLKAEET…LLVNKLKWNL (125 aa)) constitute a Cyclin N-terminal domain. The tract at residues 262-295 (AQQNMDPKAAEEEEEEEEEVDLACTPTDVRDVDI) is disordered. Lys-269 participates in a covalent cross-link: Glycyl lysine isopeptide (Lys-Gly) (interchain with G-Cter in ubiquitin). Over residues 272-282 (EEEEEEEEEVD) the composition is skewed to acidic residues. Thr-286 is modified (phosphothreonine).

This sequence belongs to the cyclin family. Cyclin D subfamily. In terms of assembly, interacts with either CDK4 or CDK6 protein kinase to form a serine/threonine kinase holoenzyme complex. The cyclin subunit imparts substrate specificity to the complex. Component of the ternary complex CCND1/CDK4/CDKN1B required for nuclear translocation and modulation of CDK4-mediated kinase activity. Interacts directly with CDKN1B. Can form similar complexes with either CDKN1A or CDKN2A. Interacts with UHRF2; the interaction ubiquitinates CCND1 and appears to occur independently of phosphorylation. Interacts with USP2. Interacts (via cyclin N-terminal domain) with INSM1 (via N-terminal region); the interaction competes with the binding of CCND1 to CDK4 during cell cycle progression and inhibits CDK4 activity. Interacts with CDK4; the interaction is prevented with the binding of CCND1 to INSM1 during cell cycle progression. Post-translationally, phosphorylation at Thr-286 by MAP kinases is required for ubiquitination and degradation by the DCX(AMBRA1) complex. It also plays an essential role for recognition by the FBXO31 component of SCF (SKP1-cullin-F-box) protein ligase complex following DNA damage. In terms of processing, ubiquitinated at Lys-269 by the DCX(AMBRA1) complex during the transition from G1 to S cell phase, leading to its degradation: ubiquitination is dependent on Thr-286 phosphorylation. The DCX(AMBRA1) complex represents the major regulator of CCND1 stability during the G1/S transition. Also ubiquitinated by the SCF(FBXO4) and Cul7-RING(FBXW8) ubiquitin-protein ligase complexes. Following DNA damage it is ubiquitinated by the SCF(FBXO31) protein ligase complex. SCF(FBXO31) ubiquitination is dependent on Thr-286 phosphorylation. Ubiquitinated also by UHRF2 apparently in a phosphorylation-independent manner. Ubiquitination leads to its degradation and G1 arrest. Deubiquitinated by USP2; leading to its stabilization.

It is found in the nucleus. The protein resides in the cytoplasm. It localises to the nucleus membrane. Functionally, regulatory component of the cyclin D1-CDK4 (DC) complex that phosphorylates and inhibits members of the retinoblastoma (RB) protein family including RB1 and regulates the cell-cycle during G(1)/S transition. Phosphorylation of RB1 allows dissociation of the transcription factor E2F from the RB/E2F complex and the subsequent transcription of E2F target genes which are responsible for the progression through the G(1) phase. Hypophosphorylates RB1 in early G(1) phase. Cyclin D-CDK4 complexes are major integrators of various mitogenenic and antimitogenic signals. Also a substrate for SMAD3, phosphorylating SMAD3 in a cell-cycle-dependent manner and repressing its transcriptional activity. Component of the ternary complex, cyclin D1/CDK4/CDKN1B, required for nuclear translocation and activity of the cyclin D-CDK4 complex. Exhibits transcriptional corepressor activity with INSM1 on the NEUROD1 and INS promoters in a cell cycle-independent manner. This Pongo abelii (Sumatran orangutan) protein is G1/S-specific cyclin-D1 (CCND1).